The chain runs to 723 residues: Polyribonucleotide nucleotidyltransferase (723 aa).

Positions 488 and 494 each coordinate Mg(2+). Residues 555–614 form the KH domain; that stretch reads PRMITMKIHPDKIREVIGKGGSTIQALTKETGTTIDIQEDGTITIASTSTDGMAEAKRRI. Residues 624 to 692 form the S1 motif domain; sequence GKIYAGTVLK…EKGRLRLSLK (69 aa). The interval 701–723 is disordered; that stretch reads SISPINAGEAAAPAAPAEGSEQQ. Residues 707 to 723 show a composition bias toward low complexity; it reads AGEAAAPAAPAEGSEQQ.

It belongs to the polyribonucleotide nucleotidyltransferase family. The cofactor is Mg(2+).

The protein resides in the cytoplasm. The catalysed reaction is RNA(n+1) + phosphate = RNA(n) + a ribonucleoside 5'-diphosphate. Its function is as follows. Involved in mRNA degradation. Catalyzes the phosphorolysis of single-stranded polyribonucleotides processively in the 3'- to 5'-direction. This chain is Polyribonucleotide nucleotidyltransferase, found in Cupriavidus necator (strain ATCC 17699 / DSM 428 / KCTC 22496 / NCIMB 10442 / H16 / Stanier 337) (Ralstonia eutropha).